We begin with the raw amino-acid sequence, 731 residues long: MAASPVPGGGGAGAVHSSNAAGFTFDSGLEIRTRSVEQTLLPLVSQITTLINHKDNTKKSDKTLQAIQRVGQAVNLAVGRFVKVGEAIANENWDLKEEINIACIEAKQAGETIASLTDVTKRSHLESDGQVTILTDKTGVVQAARLLLSSVTKVLLLADRVVIKQIVTSRNKILATMERLEKVNSFQEFVQIFSQFGNEMVEFAHLTGDRQNDLKDEKKKARMAVARAVLEKGTMMLLTASKTCLRHPSCESAHTNKEGVFDRMRVALEKVTEIVTDCRLSGETDSSSVSIFTGIKELKVNIEALRENVCFESKENLSAALEAVLEHVEDFTDSAYTSHEHRERILELSSQARTELQQLLSVWMQTQSRKTKSAAEELELTVLKISHSLDELRRELHCTAMQLAADLLKFHADHVVLKALKVTGVEGNLEALAEYACKLSEQKEQLVETCRLLRHISGTEPLEITCIHAEETFQVTGQQIISAAETLTLHPSSKIAKENLDVFCEAWESQMSDMATLLREISDVFEGRRGERCDHLSLPKPTKNSANLKSLKPDKPDSEEQAKIAKLGLKLGLLSSDADCEIEKWEDEENEIVRHGRNMSRMAYSLYLFTRGEGPLKTSQDLIHFLEVFAAEGLKLTSSVQSFSKQLKDDDKLMLLLEINKLIPLCHQLQTITKTSLQSKVFLKVDKCITKIRSMMTLVVQLLSLCYKLLKKMENNRWGSATNKDTMDGQN.

2 positions are modified to phosphoserine: S373 and S537. The interval 535–559 is disordered; it reads HLSLPKPTKNSANLKSLKPDKPDSE.

The protein belongs to the vinculin/alpha-catenin family. As to quaternary structure, interacts with ARHGEF1. Interacts with Dtna. The interaction is required for correct localization of both Ctnnal1 and Dtna.

The protein resides in the cytoplasm. Its subcellular location is the cytoskeleton. It localises to the cell membrane. Functionally, may modulate the Rho pathway signaling by providing a scaffold for the Lbc Rho guanine nucleotide exchange factor (ARHGEF1). This Mus musculus (Mouse) protein is Alpha-catulin (Ctnnal1).